Consider the following 188-residue polypeptide: Ribosome-recycling factor (188 aa).

Belongs to the RRF family.

The protein resides in the cytoplasm. In terms of biological role, responsible for the release of ribosomes from messenger RNA at the termination of protein biosynthesis. May increase the efficiency of translation by recycling ribosomes from one round of translation to another. This chain is Ribosome-recycling factor, found in Anaeromyxobacter dehalogenans (strain 2CP-1 / ATCC BAA-258).